A 60-amino-acid chain; its full sequence is Large ribosomal subunit protein bL32 (60 aa).

The tract at residues 1-60 is disordered; sequence MAVQQNKKSRSARDMRRSHDALEPNALSVEKSTGEVHLRHHVSPDGFYRGRKVIDKGADE. The span at 11 to 22 shows a compositional bias: basic and acidic residues; that stretch reads SARDMRRSHDAL.

This sequence belongs to the bacterial ribosomal protein bL32 family.

The sequence is that of Large ribosomal subunit protein bL32 from Stutzerimonas stutzeri (strain A1501) (Pseudomonas stutzeri).